The chain runs to 469 residues: Rubisco accumulation factor 1, chloroplastic (469 aa).

Residues 1–46 (MLSLSHPHPHPASTTAAAAARHHHRRNAPFAPHHRRRRRFAHLTTS) constitute a chloroplast transit peptide. Residues 1 to 78 (MLSLSHPHPH…TPPPTAPPDQ (78 aa)) are disordered. Residues 20–41 (ARHHHRRNAPFAPHHRRRRRFA) show a composition bias toward basic residues. The segment at 90 to 281 (LPDKYKDLDL…PARARVEAEL (192 aa)) is N-terminal alpha-helix. Positions 246 to 294 (RQSREAIDAEDSVAELERALEVVDTEPARARVEAELDRARRKAAGEEVD) form a coiled coil. The interval 311-456 (VPVVRLMYGE…AEVLVVVRPP (146 aa)) is C-terminal beta sheet.

It belongs to the RAF family.

The protein resides in the plastid. The protein localises to the chloroplast. Its function is as follows. Required for assembly or stability of RuBisCO. Acts at a postchaperonin step to fold and/or assemble the large subunit (LS) into RuBisCO. This Oryza sativa subsp. japonica (Rice) protein is Rubisco accumulation factor 1, chloroplastic (RAF1).